The following is a 260-amino-acid chain: Sphinganine C4-monooxygenase 1 (260 aa).

Helical transmembrane passes span 11–31 (LLGT…YVAL), 55–75 (SVVK…ILLF), and 92–112 (FLVL…WQYF). The 137-residue stretch at 99-235 (FVTAMIVLDT…FVMWDRILGT (137 aa)) folds into the Fatty acid hydroxylase domain. The short motif at 114–118 (HRYMH) is the Histidine box-1 element. Positions 128–132 (HSQHH) match the Histidine box-2 motif. The Histidine box-3 signature appears at 207-213 (YHDIHHQ).

Belongs to the sterol desaturase family. The cofactor is Fe cation. Ubiquitous, with higher levels in flowers and roots.

It localises to the endoplasmic reticulum membrane. The enzyme catalyses a dihydroceramide + 2 Fe(II)-[cytochrome b5] + O2 + 2 H(+) = a phytoceramide + 2 Fe(III)-[cytochrome b5] + H2O. The protein operates within membrane lipid metabolism; sphingolipid biosynthesis. Involved in sphingolipid trihydroxy long-chain base (4-hydroxysphinganine) biosynthesis. Can use C18- and C20-sphinganine as substrates to produce C18- and C20-phytosphinganines (D-ribo-2-amino-1,3,4-trihydroxyoctadecane and -eicosane). This is Sphinganine C4-monooxygenase 1 (SBH1) from Arabidopsis thaliana (Mouse-ear cress).